The sequence spans 185 residues: Tetratricopeptide repeat protein 36 homolog (185 aa).

TPR repeat units lie at residues Ser53 to Ala86, Val88 to Gln119, and Cys125 to Phe158.

This sequence belongs to the TTC36 family.

This chain is Tetratricopeptide repeat protein 36 homolog, found in Drosophila melanogaster (Fruit fly).